Consider the following 635-residue polypeptide: Elongation factor 4 (635 aa).

One can recognise a tr-type G domain in the interval 11-193; the sequence is EKIRNFSIIA…QIVEKVPAPT (183 aa). Residues 23 to 28 and 140 to 143 each bind GTP; these read DHGKST and NKID.

It belongs to the TRAFAC class translation factor GTPase superfamily. Classic translation factor GTPase family. LepA subfamily.

The protein resides in the cell membrane. It carries out the reaction GTP + H2O = GDP + phosphate + H(+). Functionally, required for accurate and efficient protein synthesis under certain stress conditions. May act as a fidelity factor of the translation reaction, by catalyzing a one-codon backward translocation of tRNAs on improperly translocated ribosomes. Back-translocation proceeds from a post-translocation (POST) complex to a pre-translocation (PRE) complex, thus giving elongation factor G a second chance to translocate the tRNAs correctly. Binds to ribosomes in a GTP-dependent manner. The sequence is that of Elongation factor 4 from Streptococcus pyogenes serotype M12 (strain MGAS2096).